The sequence spans 455 residues: Exodeoxyribonuclease 7 large subunit (455 aa).

This sequence belongs to the XseA family. In terms of assembly, heterooligomer composed of large and small subunits.

The protein resides in the cytoplasm. The catalysed reaction is Exonucleolytic cleavage in either 5'- to 3'- or 3'- to 5'-direction to yield nucleoside 5'-phosphates.. Its function is as follows. Bidirectionally degrades single-stranded DNA into large acid-insoluble oligonucleotides, which are then degraded further into small acid-soluble oligonucleotides. The protein is Exodeoxyribonuclease 7 large subunit of Escherichia coli O7:K1 (strain IAI39 / ExPEC).